A 340-amino-acid polypeptide reads, in one-letter code: Nicotianamine synthase 9 (340 aa).

Belongs to the nicotianamine synthase (NAS)-like family. As to quaternary structure, homotrimer.

The catalysed reaction is 3 S-adenosyl-L-methionine = nicotianamine + 3 S-methyl-5'-thioadenosine + 3 H(+). Functionally, synthesizes nicotianamine, a polyamine that is the first intermediate in the synthesis of the phytosiderophores of the mugineic acid type found in gramineae which serves as a sensor for the physiological iron status within the plant, and/or might be involved in the transport of iron. The sequence is that of Nicotianamine synthase 9 (NAS9) from Hordeum vulgare (Barley).